A 952-amino-acid chain; its full sequence is Lysosomal alpha-glucosidase (952 aa).

Residues 1–27 (MRVRHPPCSRRLLAICALVSLATAALL) form the signal peptide. A propeptide spanning residues 28 to 69 (GHILLHDFLLVPRELSGSSPVLEETHPAHQQGASRPGPRDAQ) is cleaved from the precursor. The interval 47–80 (PVLEETHPAHQQGASRPGPRDAQAHLGRPRAVPT) is disordered. Positions 80-131 (TQCDVPPNSRFDCAPDKAITREQCDARGCCYIPAKQGLRGAQMGQPWCFFPP) constitute a P-type domain. 3 disulfides stabilise this stretch: Cys-82–Cys-109, Cys-92–Cys-108, and Cys-103–Cys-127. 3 N-linked (GlcNAc...) asparagine glycosylation sites follow: Asn-140, Asn-233, and Asn-390. Asp-404 contacts substrate. Asn-470 carries an N-linked (GlcNAc...) asparagine glycan. Asp-518 (nucleophile) is an active-site residue. Glu-521 is a catalytic residue. Cys-533 and Cys-558 form a disulfide bridge. Residues Arg-600 and Asp-616 each coordinate substrate. Cys-647 and Cys-658 are oxidised to a cystine. Asn-652 is a glycosylation site (N-linked (GlcNAc...) asparagine). His-674 contributes to the substrate binding site. Residues Asn-882 and Asn-925 are each glycosylated (N-linked (GlcNAc...) asparagine).

Belongs to the glycosyl hydrolase 31 family.

It is found in the lysosome. It localises to the lysosome membrane. The enzyme catalyses Hydrolysis of terminal, non-reducing (1-&gt;4)-linked alpha-D-glucose residues with release of alpha-D-glucose.. Functionally, essential for the degradation of glycogen in lysosomes. Has highest activity on alpha-1,4-linked glycosidic linkages, but can also hydrolyze alpha-1,6-linked glucans. This chain is Lysosomal alpha-glucosidase (GAA), found in Pongo abelii (Sumatran orangutan).